The following is a 364-amino-acid chain: Dual-specificity RNA methyltransferase RlmN (364 aa).

The active-site Proton acceptor is Glu-91. The Radical SAM core domain occupies 97 to 333; the sequence is ESDRGTLCIS…VTVRKTRGDD (237 aa). A disulfide bridge links Cys-104 with Cys-338. Residues Cys-111, Cys-115, and Cys-118 each coordinate [4Fe-4S] cluster. S-adenosyl-L-methionine is bound by residues 164 to 165, Ser-196, 218 to 220, and Asn-295; these read GE and SLH. The S-methylcysteine intermediate role is filled by Cys-338.

The protein belongs to the radical SAM superfamily. RlmN family. [4Fe-4S] cluster is required as a cofactor.

It localises to the cytoplasm. The catalysed reaction is adenosine(2503) in 23S rRNA + 2 reduced [2Fe-2S]-[ferredoxin] + 2 S-adenosyl-L-methionine = 2-methyladenosine(2503) in 23S rRNA + 5'-deoxyadenosine + L-methionine + 2 oxidized [2Fe-2S]-[ferredoxin] + S-adenosyl-L-homocysteine. The enzyme catalyses adenosine(37) in tRNA + 2 reduced [2Fe-2S]-[ferredoxin] + 2 S-adenosyl-L-methionine = 2-methyladenosine(37) in tRNA + 5'-deoxyadenosine + L-methionine + 2 oxidized [2Fe-2S]-[ferredoxin] + S-adenosyl-L-homocysteine. Specifically methylates position 2 of adenine 2503 in 23S rRNA and position 2 of adenine 37 in tRNAs. m2A2503 modification seems to play a crucial role in the proofreading step occurring at the peptidyl transferase center and thus would serve to optimize ribosomal fidelity. This chain is Dual-specificity RNA methyltransferase RlmN, found in Neisseria meningitidis serogroup C (strain 053442).